A 903-amino-acid chain; its full sequence is MKEFYLTVEQIGDSIFERYIDSNGRERTREVEYKPSLFAHCPESQATKYFDIYGKPCTRKLFANMRDASQWIKRMEDIGLEALGMDDFKLAYLSDTYNYEIKYDHTKIRVANFDIEVTSPDGFPEPSQAKHPIDAITHYDSIDDRFYVFDLLNSPYGNVEEWSIEIAAKLQEQGGDEVPSEIIDKIIYMPFDNEKELLMEYLNFWQQKTPVILTGWNVESFDIPYVYNRIKNIFGESTAKRLSPHRKTRVKVIENMYGSREIITLFGISVLDYIDLYKKFSFTNQPSYSLDYISEFELNVGKLKYDGPISKLRESNHQRYISYNIIDVYRVLQIDAKRQFINLSLDMGYYAKIQIQSVFSPIKTWDAIIFNSLKEQNKVIPQGRSHPVQPYPGAFVKEPIPNRYKYVMSFDLTSLYPSIIRQVNISPETIAGTFKVAPLHDYINAVAERPSDVYSCSPNGMMYYKDRDGVVPTEITKVFNQRKEHKGYMLAAQRNGEIIKEALHNPNLSVDEPLDVDYRFDFSDEIKEKIKKLSAKSLNEMLFRAQRTEVAGMTAQINRKLLINSLYGALGNVWFRYYDLRNATAITTFGQMALQWIERKVNEYLNEVCGTEGEAFVLYGDTDSIYVSADKIIDKVGESKFRDTNHWVDFLDKFARERMEPAIDRGFREMCEYMNNKQHLMFMDREAIAGPPLGSKGIGGFWTGKKRYALNVWDMEGTRYAEPKLKIMGLETQKSSTPKAVQKALKECIRRMLQEGEESLQEYFKEFEKEFRQLNYISIASVSSANNIAKYDVGGFPGPKCPFHIRGILTYNRAIKGNIDAPQVVEGEKVYVLPLREGNPFGDKCIAWPSGTEITDLIKDDVLHWMDYTVLLEKTFIKPLEGFTSAAKLDYEKKASLFDMFDF.

Positions 103 to 340 (YDHTKIRVAN…VLQIDAKRQF (238 aa)) are 3'-5'exonuclease. The Mg(2+) site is built by aspartate 114, glutamate 116, and aspartate 222. Residues 248–264 (TRVKVIENMYGSREIIT) form a beta hairpin region. Positions 327, 411, and 412 each coordinate Mg(2+). A polymerase region spans residues 380–903 (IPQGRSHPVQ…KASLFDMFDF (524 aa)). Substrate is bound by residues 414-416 (SLY), arginine 482, and lysine 560. Aspartate 623 contacts Mg(2+). The binding of DNA in B-conformation stretch occupies residues 705-708 (KKRY). Residues 897 to 903 (LFDMFDF) form an interaction with the polymerase clamp region.

Belongs to the DNA polymerase type-B family. In terms of assembly, part of the replicase complex that includes the DNA polymerase, the polymerase clamp, the clamp loader complex, the single-stranded DNA binding protein, and the primase/helicase. Interacts with the polymerase clamp; this interaction constitutes the polymerase holoenzyme. It depends on Mg(2+) as a cofactor.

It carries out the reaction DNA(n) + a 2'-deoxyribonucleoside 5'-triphosphate = DNA(n+1) + diphosphate. Replicates the viral genomic DNA. This polymerase possesses two enzymatic activities: DNA synthesis (polymerase) and an exonucleolytic activity that degrades single-stranded DNA in the 3'- to 5'-direction for proofreading purpose. The polypeptide is DNA-directed DNA polymerase (43) (Escherichia coli (Bacteriophage RB69)).